The primary structure comprises 477 residues: MAKLIPLYQYAGQDLGIMGLGKSGMATARALAGTGTRVHAWDDSPILRDAARAESVPLCDLTDQTSRTSPWPALQGVVWSPGIPHTFPQPHPVAVIAHERGVPLFCDIDLLARARQDCFFLGITGTNGKSTTTALIGHILKAARHPVQVGGNLGTPALSFEPLPFHGTYVLELSSYQLELVPSLCCDVAVLLNITPDHLARHGGMDGYIAAKRQIFRCGPRPGVAVVCIDDEPSLAIHDALCRENGRKVVAVSTRALPRGGVGAVDGQLVDATQGRPRAVADLTTIATLPGAHNWQNAAAAYAACRQHGIDAKIIVEAMASFPGLPHRQELVAEIDGVRFINDSKATNADAADKALRCYDTVYWIAGGQPKEGGIVSLEPHFHRMRQAYLIGQAAPAFERTLKGKVPLSQVGTLTRAVTEAAKAAWRDAIPGAVVLLSPACASWDQFSSFEHRGDIFRELVADLAHTRAAAKPGGRR.

125–131 (GTNGKST) is a binding site for ATP.

It belongs to the MurCDEF family.

It is found in the cytoplasm. It carries out the reaction UDP-N-acetyl-alpha-D-muramoyl-L-alanine + D-glutamate + ATP = UDP-N-acetyl-alpha-D-muramoyl-L-alanyl-D-glutamate + ADP + phosphate + H(+). It functions in the pathway cell wall biogenesis; peptidoglycan biosynthesis. Its function is as follows. Cell wall formation. Catalyzes the addition of glutamate to the nucleotide precursor UDP-N-acetylmuramoyl-L-alanine (UMA). The polypeptide is UDP-N-acetylmuramoylalanine--D-glutamate ligase (Rhodospirillum rubrum (strain ATCC 11170 / ATH 1.1.1 / DSM 467 / LMG 4362 / NCIMB 8255 / S1)).